The primary structure comprises 112 residues: cAMP-regulated phosphoprotein 19 (112 aa).

Over residues 1–11 (MSAESPEPASA) the composition is skewed to low complexity. A disordered region spans residues 1–49 (MSAESPEPASAEEQKEMEDKVLSPEKAEEAKLKARYPHLGQKPGGSDFL). Residues 12-32 (EEQKEMEDKVLSPEKAEEAKL) are compositionally biased toward basic and acidic residues. Phosphoserine; by GWL occurs at positions 62 and 104. Residues 72-112 (MKNKQLPTAAPDKTEVTGDHIPTPQDLPQRKPSLVASKLAG) form a disordered region. A Phosphoserine; by PKA modification is found at serine 104.

This sequence belongs to the endosulfine family. As to quaternary structure, interacts (when phosphorylated at Ser-62) with PPP2R2D. In terms of processing, phosphorylation at Ser-62 by MASTL/GWL during mitosis is essential for interaction with PPP2R2D (PR55-delta) and subsequent inactivation of PP2A.

Its subcellular location is the cytoplasm. Functionally, protein phosphatase inhibitor that specifically inhibits protein phosphatase 2A (PP2A) during mitosis. Inhibition of PP2A is enhanced when ARPP19 is phosphorylated. When phosphorylated at Ser-62 during mitosis, specifically interacts with PPP2R2D (PR55-delta) and inhibits its activity, leading to inactivation of PP2A, an essential condition to keep cyclin-B1-CDK1 activity high during M phase. In Taeniopygia guttata (Zebra finch), this protein is cAMP-regulated phosphoprotein 19 (ARPP19).